Consider the following 383-residue polypeptide: La protein homolog (383 aa).

Positions 1-43 (MTEVEAKATATEETTKEEEEAPETTAEQTEESAQETSENVSKL) are disordered. Positions 15–33 (TKEEEEAPETTAEQTEESA) are enriched in acidic residues. An HTH La-type RNA-binding domain is found at 37–129 (SENVSKLEAS…RRHPERPLPE (93 aa)). Positions 141–228 (RTVYVKGFAP…RKMQDDYFEE (88 aa)) constitute an RRM domain. The xRRM domain occupies 249 to 368 (HLPKGASVHL…RTPEGRQASR (120 aa)). Residues 343 to 383 (KDQQARRQASNARNKGRTPEGRQASRPPQEWRRKAKGGRGE) are disordered.

It is found in the nucleus. Its subcellular location is the cytoplasm. In terms of biological role, may be involved in transcription termination by RNA polymerase III. Binds RNA and DNA. Binds to the 3' end of the minus strand of Sindbis virus RNA. This may be significant for Sindbis virus RNA replication. The protein is La protein homolog of Aedes albopictus (Asian tiger mosquito).